The sequence spans 547 residues: MEAGGDTAAPVPGGAEDLEDTQFPSEETREGGGVHAVPLDPEGEGLEETGSKDKDQPPSPSPPPQSEAPSSTSRLWSPAAPENSPTRSPESSSGGQGGDPSDEEWRSQRKHVFVLSEAGKPIYLRYGSVEALSATMGVMTALVSFVQSAGDTIRAIYAEDHKLVFLQQGPLLLVAMSRTSQSAAQLRGELLAVHAQIVSTLTRASVARIFAHKQNYDLRRLLAGSERTLDRLLDSVEQDPGALLLGAVRCVPLARPLRDALGALLRRCTAPGLALSVLAVGGRLITAAQERNVLAECRLDPADLQLLLDWVGAPAFAAGEAWAPVCLPRFNPDGFFYAYVARLDAMPVCLLLLGTQREAFHAMAACRRLVEDGMHALGAMRVLGEAAGFSNASSASAPAYSVQAVGAPGLRHFLYKPLDIPDHHRQLPQFTSPELEAPYSREEERQRLSDLYHRLHARLHNTSRPLRLIYHVAEKETLLAWVTSKFELYTCLSPLVTKAGAILVVTKLLRWVKKEEDRLFIRYPPKYSTPPAPSTDQAAHNGLFTGL.

Residue methionine 1 is modified to N-acetylmethionine. A disordered region spans residues 1–106 (MEAGGDTAAP…GGDPSDEEWR (106 aa)). Residues 57 to 66 (PPSPSPPPQS) are compositionally biased toward pro residues. Phosphoserine is present on residues serine 59 and serine 61.

Belongs to the MON1/SAND family. In terms of assembly, interacts with CCNT2; down-regulates CCNT2-mediated activation of viral promoters during herpes simplex virus 1/HHV-1 infection. Found in a complex with RMC1, CCZ1 MON1A and MON1B.

The polypeptide is Vacuolar fusion protein MON1 homolog B (MON1B) (Macaca fascicularis (Crab-eating macaque)).